An 87-amino-acid polypeptide reads, in one-letter code: RNA-binding protein Hfq (87 aa).

Residues 9–68 enclose the Sm domain; it reads DPYLNVLRKERIPVSIYLVNGIKLQGQVESFDQFVVLLKNTVSQMVYKHAISTVVPSRPV.

Belongs to the Hfq family. Homohexamer.

In terms of biological role, RNA chaperone that binds small regulatory RNA (sRNAs) and mRNAs to facilitate mRNA translational regulation in response to envelope stress, environmental stress and changes in metabolite concentrations. Also binds with high specificity to tRNAs. In Teredinibacter turnerae (strain ATCC 39867 / T7901), this protein is RNA-binding protein Hfq.